The sequence spans 434 residues: Glutamate-1-semialdehyde 2,1-aminomutase (434 aa).

An N6-(pyridoxal phosphate)lysine modification is found at Lys-267.

It belongs to the class-III pyridoxal-phosphate-dependent aminotransferase family. HemL subfamily. As to quaternary structure, homodimer. Pyridoxal 5'-phosphate serves as cofactor.

It localises to the cytoplasm. The catalysed reaction is (S)-4-amino-5-oxopentanoate = 5-aminolevulinate. The protein operates within porphyrin-containing compound metabolism; protoporphyrin-IX biosynthesis; 5-aminolevulinate from L-glutamyl-tRNA(Glu): step 2/2. It participates in porphyrin-containing compound metabolism; chlorophyll biosynthesis. The sequence is that of Glutamate-1-semialdehyde 2,1-aminomutase from Roseiflexus castenholzii (strain DSM 13941 / HLO8).